A 616-amino-acid polypeptide reads, in one-letter code: DNA mismatch repair protein MutL (616 aa).

It belongs to the DNA mismatch repair MutL/HexB family.

Its function is as follows. This protein is involved in the repair of mismatches in DNA. It is required for dam-dependent methyl-directed DNA mismatch repair. May act as a 'molecular matchmaker', a protein that promotes the formation of a stable complex between two or more DNA-binding proteins in an ATP-dependent manner without itself being part of a final effector complex. The protein is DNA mismatch repair protein MutL of Syntrophus aciditrophicus (strain SB).